The chain runs to 179 residues: MSLKKRYRETIQPKLQKDLSLTNIHEVPKVLKVTVNRGLGEAAANAKSLEASVNELAQITGQKVVVTRAKKAIAGFKIRQGMPIGCAVTLRGDRMYAFLERLINLALPRIRDFRGVSPKSFDGRGNYTLGVREQIIFPEISFDKIDAIRGMDITIVTTARSDEEGRALLREMGMPFQSN.

This sequence belongs to the universal ribosomal protein uL5 family. Part of the 50S ribosomal subunit; part of the 5S rRNA/L5/L18/L25 subcomplex. Contacts the 5S rRNA and the P site tRNA. Forms a bridge to the 30S subunit in the 70S ribosome.

This is one of the proteins that bind and probably mediate the attachment of the 5S RNA into the large ribosomal subunit, where it forms part of the central protuberance. In the 70S ribosome it contacts protein S13 of the 30S subunit (bridge B1b), connecting the 2 subunits; this bridge is implicated in subunit movement. Contacts the P site tRNA; the 5S rRNA and some of its associated proteins might help stabilize positioning of ribosome-bound tRNAs. The chain is Large ribosomal subunit protein uL5 from Synechococcus sp. (strain CC9605).